A 492-amino-acid chain; its full sequence is Cysteine--tRNA ligase (492 aa).

Cysteine 31 serves as a coordination point for Zn(2+). The 'HIGH' region motif lies at 33-43; that stretch reads PTVYGDPHLGH. Residues cysteine 226, histidine 251, and glutamate 255 each coordinate Zn(2+). A 'KMSKS' region motif is present at residues 283-287; it reads KMGKS. An ATP-binding site is contributed by lysine 286.

It belongs to the class-I aminoacyl-tRNA synthetase family. In terms of assembly, monomer. Zn(2+) is required as a cofactor.

The protein resides in the cytoplasm. The enzyme catalyses tRNA(Cys) + L-cysteine + ATP = L-cysteinyl-tRNA(Cys) + AMP + diphosphate. This chain is Cysteine--tRNA ligase, found in Azobacteroides pseudotrichonymphae genomovar. CFP2.